A 277-amino-acid chain; its full sequence is 3-methyl-2-oxobutanoate hydroxymethyltransferase (277 aa).

The Mg(2+) site is built by aspartate 53 and aspartate 96. 3-methyl-2-oxobutanoate is bound by residues 53-54, aspartate 96, and lysine 126; that span reads DS. Position 128 (glutamate 128) interacts with Mg(2+). Catalysis depends on glutamate 195, which acts as the Proton acceptor.

This sequence belongs to the PanB family. Homodecamer; pentamer of dimers. Mg(2+) serves as cofactor.

The protein localises to the cytoplasm. It catalyses the reaction 3-methyl-2-oxobutanoate + (6R)-5,10-methylene-5,6,7,8-tetrahydrofolate + H2O = 2-dehydropantoate + (6S)-5,6,7,8-tetrahydrofolate. The protein operates within cofactor biosynthesis; (R)-pantothenate biosynthesis; (R)-pantoate from 3-methyl-2-oxobutanoate: step 1/2. Functionally, catalyzes the reversible reaction in which hydroxymethyl group from 5,10-methylenetetrahydrofolate is transferred onto alpha-ketoisovalerate to form ketopantoate. In Pelodictyon phaeoclathratiforme (strain DSM 5477 / BU-1), this protein is 3-methyl-2-oxobutanoate hydroxymethyltransferase.